The following is a 79-amino-acid chain: Sec-independent protein translocase protein TatA (79 aa).

Residues 1–21 form a helical membrane-spanning segment; that stretch reads MGGLQPWHWVIVIAVFVLLFG. Basic and acidic residues predominate over residues 43–52; that stretch reads IKEMQSEGKS. The tract at residues 43-79 is disordered; that stretch reads IKEMQSEGKSDNPPATPITSERVDTNPTAEQPDKRSA.

The protein belongs to the TatA/E family. In terms of assembly, the Tat system comprises two distinct complexes: a TatABC complex, containing multiple copies of TatA, TatB and TatC subunits, and a separate TatA complex, containing only TatA subunits. Substrates initially bind to the TatABC complex, which probably triggers association of the separate TatA complex to form the active translocon.

It localises to the cell membrane. Part of the twin-arginine translocation (Tat) system that transports large folded proteins containing a characteristic twin-arginine motif in their signal peptide across membranes. TatA could form the protein-conducting channel of the Tat system. In Mycobacterium sp. (strain JLS), this protein is Sec-independent protein translocase protein TatA.